Consider the following 193-residue polypeptide: Acyl carrier protein phosphodiesterase (193 aa).

It belongs to the AcpH family.

The enzyme catalyses holo-[ACP] + H2O = apo-[ACP] + (R)-4'-phosphopantetheine + H(+). Converts holo-ACP to apo-ACP by hydrolytic cleavage of the phosphopantetheine prosthetic group from ACP. The polypeptide is Acyl carrier protein phosphodiesterase (Enterobacter sp. (strain 638)).